A 281-amino-acid polypeptide reads, in one-letter code: Phosphatidylglycerol--prolipoprotein diacylglyceryl transferase (281 aa).

A run of 3 helical transmembrane segments spans residues 11 to 31, 57 to 77, and 89 to 109; these read IIFT…VISF, LLYS…IIFY, and VFYI…AIIV. Arg140 contributes to the a 1,2-diacyl-sn-glycero-3-phospho-(1'-sn-glycerol) binding site. 3 helical membrane passes run 194–214, 222–242, and 255–275; these read PTQL…IYFF, GSIS…IEFF, and IITM…IIMY.

This sequence belongs to the Lgt family.

The protein resides in the cell inner membrane. The enzyme catalyses L-cysteinyl-[prolipoprotein] + a 1,2-diacyl-sn-glycero-3-phospho-(1'-sn-glycerol) = an S-1,2-diacyl-sn-glyceryl-L-cysteinyl-[prolipoprotein] + sn-glycerol 1-phosphate + H(+). Its pathway is protein modification; lipoprotein biosynthesis (diacylglyceryl transfer). Catalyzes the transfer of the diacylglyceryl group from phosphatidylglycerol to the sulfhydryl group of the N-terminal cysteine of a prolipoprotein, the first step in the formation of mature lipoproteins. The polypeptide is Phosphatidylglycerol--prolipoprotein diacylglyceryl transferase (Buchnera aphidicola subsp. Acyrthosiphon pisum (strain APS) (Acyrthosiphon pisum symbiotic bacterium)).